Reading from the N-terminus, the 431-residue chain is Adenylosuccinate synthetase (431 aa).

GTP contacts are provided by residues 13–19 (GDEGKGK) and 41–43 (GHT). Asp-14 (proton acceptor) is an active-site residue. 2 residues coordinate Mg(2+): Asp-14 and Gly-41. IMP-binding positions include 14–17 (DEGK), 39–42 (NAGH), Thr-130, Arg-144, Gln-225, Thr-240, and Arg-304. Catalysis depends on His-42, which acts as the Proton donor. Residue 300–306 (ATTGRAR) participates in substrate binding. GTP is bound by residues Arg-306, 332–334 (KLD), and 414–416 (STG).

It belongs to the adenylosuccinate synthetase family. As to quaternary structure, homodimer. Mg(2+) serves as cofactor.

The protein localises to the cytoplasm. It catalyses the reaction IMP + L-aspartate + GTP = N(6)-(1,2-dicarboxyethyl)-AMP + GDP + phosphate + 2 H(+). It functions in the pathway purine metabolism; AMP biosynthesis via de novo pathway; AMP from IMP: step 1/2. In terms of biological role, plays an important role in the de novo pathway of purine nucleotide biosynthesis. Catalyzes the first committed step in the biosynthesis of AMP from IMP. The protein is Adenylosuccinate synthetase of Chromohalobacter salexigens (strain ATCC BAA-138 / DSM 3043 / CIP 106854 / NCIMB 13768 / 1H11).